A 316-amino-acid polypeptide reads, in one-letter code: Probable inactive poly [ADP-ribose] polymerase SRO4 (316 aa).

Residues Met1–Glu28 are disordered. Low complexity predominate over residues Glu14–Ser23. Positions Glu28 to Leu255 constitute a PARP catalytic domain. The RST domain maps to Lys243 to Lys314.

It is found in the nucleus. Functionally, probable inactive ADP-ribosyltransferase that may be involved in stress and developmental responses. This Arabidopsis thaliana (Mouse-ear cress) protein is Probable inactive poly [ADP-ribose] polymerase SRO4 (SRO4).